The chain runs to 321 residues: Nucleus-vacuole junction protein 1 (321 aa).

Residues 1–22 (MTRPPLVRGIFSLGLSVAVLKG) form the signal peptide. Positions 73–125 (ELSWRKVFNFISRQSSELDTRIYVLILLLSFLLPIAWTVLDGDRETTLEDKDN) are TSC13-binding. The chain crosses the membrane as a helical span at residues 94–114 (IYVLILLLSFLLPIAWTVLDG). An OSH1-binding region spans residues 139–195 (KHYNDGERAVLQFGKNRSEPIILSYKDMNVLEGEHEFTSKEEHSNSHLTSKSENALN). Phosphoserine is present on residues Ser-156 and Ser-199. Positions 211–275 (LEEDKNEPNG…SLKSSTSFPI (65 aa)) are disordered. A VAC8-binding region spans residues 233-321 (DCSSSSEVES…EQAYSQPFRY (89 aa)). Basic and acidic residues predominate over residues 242 to 262 (SQSKCRKESTAEPDSLSRDTR). Positions 263 to 272 (TTSSLKSSTS) are enriched in low complexity. Residues Ser-285 and Ser-298 each carry the phosphoserine modification. Residues 299–321 (PTKSSNLDAQVNTEQAYSQPFRY) form a disordered region.

Interacts with OSH1, TSC13 and VAC8.

The protein localises to the nucleus outer membrane. Functionally, involved in the formation of nucleus-vacuole junctions (NVJs) during piecemeal microautophagy of the nucleus (PMN). NVJs are interorganelle interfaces mediated by NVJ1 in the nuclear envelope and VAC8 on the vacuole membrane. Together, NVJ1 and VAC8 form Velcro-like patches through which teardrop-like portions of the nucleus are pinched off into the vacuolar lumen and degraded by the PMN process. Also acts as an outer-nuclear membrane receptor for OSH1 and TSC13. The sequence is that of Nucleus-vacuole junction protein 1 (NVJ1) from Saccharomyces cerevisiae (strain ATCC 204508 / S288c) (Baker's yeast).